The sequence spans 228 residues: Cytidylate kinase (228 aa).

10–18 is an ATP binding site; that stretch reads GPSGSGKGT.

Belongs to the cytidylate kinase family. Type 1 subfamily.

Its subcellular location is the cytoplasm. It carries out the reaction CMP + ATP = CDP + ADP. The enzyme catalyses dCMP + ATP = dCDP + ADP. The chain is Cytidylate kinase from Acinetobacter baumannii (strain SDF).